The primary structure comprises 415 residues: Nuclear hormone receptor family member nhr-153 (415 aa).

The segment at residues 26–105 (PSVCQICRNP…AGMNPMAIQA (80 aa)) is a DNA-binding region (nuclear receptor). 2 NR C4-type zinc fingers span residues 29–49 (CQIC…CNGC) and 65–88 (CFKV…CRAC). Residues 170 to 406 (DQRDLSTALS…DPEVLKKKCI (237 aa)) form the NR LBD domain.

It belongs to the nuclear hormone receptor family.

Its subcellular location is the nucleus. Orphan nuclear receptor. The protein is Nuclear hormone receptor family member nhr-153 (nhr-153) of Caenorhabditis elegans.